The chain runs to 164 residues: Phosphopantetheine adenylyltransferase (164 aa).

Residue S9 coordinates substrate. ATP-binding positions include 9 to 10 and H17; that span reads SF. 3 residues coordinate substrate: K41, L73, and K87. ATP-binding positions include 88–90, E98, and 123–129; these read GLR and YSYISSS.

The protein belongs to the bacterial CoaD family. As to quaternary structure, homohexamer. Requires Mg(2+) as cofactor.

The protein resides in the cytoplasm. It carries out the reaction (R)-4'-phosphopantetheine + ATP + H(+) = 3'-dephospho-CoA + diphosphate. It functions in the pathway cofactor biosynthesis; coenzyme A biosynthesis; CoA from (R)-pantothenate: step 4/5. Functionally, reversibly transfers an adenylyl group from ATP to 4'-phosphopantetheine, yielding dephospho-CoA (dPCoA) and pyrophosphate. This is Phosphopantetheine adenylyltransferase from Clostridium perfringens (strain 13 / Type A).